Here is an 82-residue protein sequence, read N- to C-terminus: uncharacterized protein (82 aa).

This is an uncharacterized protein from Orgyia pseudotsugata multicapsid polyhedrosis virus (OpMNPV).